Consider the following 762-residue polypeptide: 5-methyltetrahydropteroyltriglutamate--homocysteine methyltransferase (762 aa).

5-methyltetrahydropteroyltri-L-glutamate contacts are provided by residues 17–20 (REWK) and Lys-111. L-homocysteine is bound by residues 435-437 (IGS) and Glu-488. Residues 435 to 437 (IGS) and Glu-488 each bind L-methionine. 5-methyltetrahydropteroyltri-L-glutamate contacts are provided by residues 519-520 (RC) and Trp-565. Asp-603 lines the L-homocysteine pocket. Asp-603 lines the L-methionine pocket. Glu-609 is a binding site for 5-methyltetrahydropteroyltri-L-glutamate. The Zn(2+) site is built by His-645, Cys-647, and Glu-669. His-698 (proton donor) is an active-site residue. Cys-730 is a Zn(2+) binding site.

Belongs to the vitamin-B12 independent methionine synthase family. The cofactor is Zn(2+).

The enzyme catalyses 5-methyltetrahydropteroyltri-L-glutamate + L-homocysteine = tetrahydropteroyltri-L-glutamate + L-methionine. Its pathway is amino-acid biosynthesis; L-methionine biosynthesis via de novo pathway; L-methionine from L-homocysteine (MetE route): step 1/1. Functionally, catalyzes the transfer of a methyl group from 5-methyltetrahydrofolate to homocysteine resulting in methionine formation. The sequence is that of 5-methyltetrahydropteroyltriglutamate--homocysteine methyltransferase from Bacillus cytotoxicus (strain DSM 22905 / CIP 110041 / 391-98 / NVH 391-98).